The sequence spans 1024 residues: Seizure 6-like protein (1024 aa).

A signal peptide spans 1–28 (MPAARPPAAGLRGISLFLALLLGSPAAA). Topologically, residues 29–958 (LERDALPEGD…ETSLEGGNMA (930 aa)) are extracellular. 3 disordered regions span residues 33–77 (ALPE…SQSA), 108–184 (RPKH…EVPL), and 212–234 (AHTLPQRPEPGEPGPDMAQEAPQ). Ser-49 is a glycosylation site (O-linked (GalNAc...) serine). The span at 56 to 66 (SPGKEHPEERV) shows a compositional bias: basic and acidic residues. Positions 110–120 (KHALPPKKKLP) are enriched in basic residues. Over residues 138 to 162 (SAATVQRAGSQPASQGLDLLSSSTE) the composition is skewed to polar residues. 2 O-glycosylated at one site regions span residues 147–161 (SQPASQGLDLLSSST) and 176–180 (SEEAS). Residues Cys-281 and Cys-308 are joined by a disulfide bond. A CUB 1 domain is found at 281 to 389 (CSVSFSNPEG…GTFQLHYQAF (109 aa)). Asn-311, Asn-328, and Asn-350 each carry an N-linked (GlcNAc...) asparagine glycan. The region spanning 391 to 450 (LSCNFPRRPDSGDVTVMDLHSGGVAHFHCHLGYELQGAKMLTCINASKPHWSSQEPICSA) is the Sushi 1 domain. 2 disulfides stabilise this stretch: Cys-393/Cys-433 and Cys-419/Cys-448. 8 N-linked (GlcNAc...) asparagine glycosylation sites follow: Asn-435, Asn-458, Asn-474, Asn-514, Asn-576, Asn-618, Asn-674, and Asn-742. The CUB 2 domain occupies 452-562 (CGGAVHNATI…STFNIRFEAF (111 aa)). Residues 565-626 (GHCYEPYIQN…WNDTEPLCRA (62 aa)) form the Sushi 2 domain. 2 disulfide bridges follow: Cys-567–Cys-609 and Cys-594–Cys-624. One can recognise a CUB 3 domain in the interval 628–739 (CGGELSAVAG…QGFIMNYIEV (112 aa)). Sushi domains are found at residues 743 to 802 (DSCS…FCEK), 804 to 867 (MYCT…HCVS), and 871 to 932 (LACD…VCKV). Cystine bridges form between Cys-745–Cys-787, Cys-773–Cys-800, Cys-806–Cys-848, Cys-834–Cys-865, Cys-873–Cys-915, and Cys-901–Cys-930. Residues 959–979 (LAIFIPVLIISLLLGGAYIYI) traverse the membrane as a helical segment. At 980-1024 (TRCRYYSNLRLPLMYSHPYSQITVETEFDNPIYETGETREYEVSI) the chain is on the cytoplasmic side.

It belongs to the SEZ6 family. Post-translationally, O-glycosylated. Widely expressed, including adult and fetal brains and lungs. Not expressed in all lung cancer cell lines.

Its subcellular location is the endoplasmic reticulum membrane. Functionally, may contribute to specialized endoplasmic reticulum functions in neurons. The chain is Seizure 6-like protein (SEZ6L) from Homo sapiens (Human).